The sequence spans 137 residues: Small heat shock protein IbpA (137 aa).

In terms of domain architecture, sHSP spans 28 to 137 (SQSNGGYPPY…ANKPRRIEIN (110 aa)).

Belongs to the small heat shock protein (HSP20) family. In terms of assembly, monomer. Forms homomultimers of about 100-150 subunits at optimal growth temperatures. Conformation changes to monomers at high temperatures or high ionic concentrations.

The protein localises to the cytoplasm. Associates with aggregated proteins, together with IbpB, to stabilize and protect them from irreversible denaturation and extensive proteolysis during heat shock and oxidative stress. Aggregated proteins bound to the IbpAB complex are more efficiently refolded and reactivated by the ATP-dependent chaperone systems ClpB and DnaK/DnaJ/GrpE. Its activity is ATP-independent. In Citrobacter koseri (strain ATCC BAA-895 / CDC 4225-83 / SGSC4696), this protein is Small heat shock protein IbpA.